A 511-amino-acid chain; its full sequence is 2'-5'-oligoadenylate synthase-like protein 1 (511 aa).

2 Ubiquitin-like domains span residues 350 to 429 (IQVT…ISPE) and 430 to 506 (IQVF…EGAA).

Belongs to the 2-5A synthase family. As to quaternary structure, specifically interacts with the ligand binding domain of the thyroid receptor (TR). TRIP14 does not require the presence of thyroid hormone for its interaction. Binds MBD1.

Its subcellular location is the nucleus. The protein resides in the nucleolus. It is found in the cytoplasm. Its function is as follows. Does not have 2'-5'-OAS activity, but can bind double-stranded RNA. Displays antiviral activity via an alternative antiviral pathway independent of RNase L. This Mus musculus (Mouse) protein is 2'-5'-oligoadenylate synthase-like protein 1 (Oasl1).